We begin with the raw amino-acid sequence, 214 residues long: 14-3-3 protein homolog 2 (214 aa).

Belongs to the 14-3-3 family.

The sequence is that of 14-3-3 protein homolog 2 from Schistosoma mansoni (Blood fluke).